We begin with the raw amino-acid sequence, 504 residues long: Maturase K (504 aa).

The protein belongs to the intron maturase 2 family. MatK subfamily.

The protein resides in the plastid. Its subcellular location is the chloroplast. Its function is as follows. Usually encoded in the trnK tRNA gene intron. Probably assists in splicing its own and other chloroplast group II introns. The sequence is that of Maturase K from Lepidium campestre (Field pepperwort).